A 566-amino-acid chain; its full sequence is Transcription factor tasR (566 aa).

Over residues 1 to 30 the composition is skewed to low complexity; the sequence is MISASRMEESASSSSLSDAAAPPPGAALQS. The tract at residues 1 to 31 is disordered; that stretch reads MISASRMEESASSSSLSDAAAPPPGAALQSI. The zn(2)-C6 fungal-type DNA-binding region spans 35–68; the sequence is CDRCRFHKLKCNVPAAGHGGPVPCERCTRAKVPC. 4 disordered regions span residues 72-174, 346-382, 422-453, and 500-551; these read RRRR…PGQH, EFIVTNNPQKHLGSESSSSSSSSISNSSSNNEAGGDD, SESDGCGRGASRSGPNASPALRLGELPSTGTA, and RGVG…GLGG. 2 stretches are compositionally biased toward low complexity: residues 89-108 and 359-378; these read PTRRATMPSPSPTPASTSAA and SESSSSSSSSISNSSSNNEA. Over residues 501-532 the composition is skewed to gly residues; sequence GVGGGGGGGGGGGGGGGGGVGGGGGGGGGPGG.

The protein resides in the nucleus. Its function is as follows. Transcription factor that regulates the expression of the gene cluster that mediates the biosynthesis of the tetramic acids Sch210971 and Sch210972, potential anti-HIV fungal natural product that contain a decalin core. This chain is Transcription factor tasR, found in Hapsidospora irregularis.